The primary structure comprises 171 residues: uncharacterized protein (171 aa).

Residues 1–17 (MLKRIIWILFLLGLTWG) form the signal peptide.

In terms of biological role, part of the elfADCG-ycbUVF fimbrial operon, which promotes adhesion of bacteria to different abiotic surfaces. This is an uncharacterized protein from Escherichia coli (strain K12).